Consider the following 348-residue polypeptide: Phosphate acyltransferase (348 aa).

This sequence belongs to the PlsX family. As to quaternary structure, homodimer. Probably interacts with PlsY.

Its subcellular location is the cytoplasm. The enzyme catalyses a fatty acyl-[ACP] + phosphate = an acyl phosphate + holo-[ACP]. The protein operates within lipid metabolism; phospholipid metabolism. Functionally, catalyzes the reversible formation of acyl-phosphate (acyl-PO(4)) from acyl-[acyl-carrier-protein] (acyl-ACP). This enzyme utilizes acyl-ACP as fatty acyl donor, but not acyl-CoA. The protein is Phosphate acyltransferase of Nitrosomonas europaea (strain ATCC 19718 / CIP 103999 / KCTC 2705 / NBRC 14298).